The following is a 285-amino-acid chain: Sulfotransferase 2A1 (285 aa).

3'-phosphoadenylyl sulfate is bound by residues lysine 44, serine 45, glycine 46, threonine 47, asparagine 48, and tryptophan 49. The Proton acceptor role is filled by histidine 99. Residues arginine 121, serine 129, tyrosine 184, serine 218, methionine 223, arginine 247, lysine 248, and glycine 249 each coordinate 3'-phosphoadenylyl sulfate.

This sequence belongs to the sulfotransferase 1 family. As to quaternary structure, homodimer. As to expression, highly expressed in liver.

The protein resides in the cytoplasm. It carries out the reaction an alcohol + 3'-phosphoadenylyl sulfate = an alkyl sulfate + adenosine 3',5'-bisphosphate + H(+). The catalysed reaction is taurolithocholate + 3'-phosphoadenylyl sulfate = taurolithocholate 3-sulfate + adenosine 3',5'-bisphosphate + H(+). It catalyses the reaction pregnenolone + 3'-phosphoadenylyl sulfate = pregnenolone sulfate + adenosine 3',5'-bisphosphate + H(+). The enzyme catalyses 3beta-hydroxyandrost-5-en-17-one + 3'-phosphoadenylyl sulfate = dehydroepiandrosterone 3-sulfate + adenosine 3',5'-bisphosphate + H(+). It carries out the reaction lithocholate + 3'-phosphoadenylyl sulfate = lithocholate sulfate + adenosine 3',5'-bisphosphate + H(+). The catalysed reaction is (24S)-hydroxycholesterol + 3'-phosphoadenylyl sulfate = (24S)-hydroxycholesterol 24-sulfate + adenosine 3',5'-bisphosphate + H(+). It catalyses the reaction (24S)-hydroxycholesterol + 3'-phosphoadenylyl sulfate = (24S)-hydroxycholesterol 3-sulfate + adenosine 3',5'-bisphosphate + H(+). The enzyme catalyses (24S)-hydroxycholesterol 24-sulfate + 3'-phosphoadenylyl sulfate = (24S)-hydroxycholesterol 3,24-disulfate + adenosine 3',5'-bisphosphate + H(+). It carries out the reaction androsterone + 3'-phosphoadenylyl sulfate = androsterone 3alpha-sulfate + adenosine 3',5'-bisphosphate + H(+). Its function is as follows. Sulfotransferase that utilizes 3'-phospho-5'-adenylyl sulfate (PAPS) as sulfonate donor to catalyze the sulfonation of steroids and bile acids in the liver and adrenal glands. Mediates the sulfation of a wide range of steroids and sterols, including pregnenolone, androsterone, DHEA, bile acids, cholesterol and as well many xenobiotics that contain alcohol and phenol functional groups. Sulfonation increases the water solubility of most compounds, and therefore their renal excretion, but it can also result in bioactivation to form active metabolites. Plays an important role in maintening steroid and lipid homeostasis. Plays a key role in bile acid metabolism. In addition, catalyzes the metabolic activation of potent carcinogenic polycyclic arylmethanols. In Mus musculus (Mouse), this protein is Sulfotransferase 2A1 (Sult2a1).